The following is a 195-amino-acid chain: UPF0314 protein RHECIAT_CH0004233 (195 aa).

4 helical membrane passes run Phe15–Gly35, Trp64–Leu84, Gly127–Ala147, and Ala150–Ile170.

This sequence belongs to the UPF0314 family.

It localises to the cell membrane. The polypeptide is UPF0314 protein RHECIAT_CH0004233 (Rhizobium etli (strain CIAT 652)).